Consider the following 448-residue polypeptide: tRNA-2-methylthio-N(6)-dimethylallyladenosine synthase (448 aa).

Residues 3–120 (KKLFIKTHGC…LPTMLDSRQG (118 aa)) enclose the MTTase N-terminal domain. [4Fe-4S] cluster contacts are provided by C12, C49, C83, C158, C162, and C165. The Radical SAM core domain maps to 144–376 (TSDGATAFVS…QERLNQQTMQ (233 aa)). Residues 379-444 (RRMVGNTERI…PNSLRGDLAS (66 aa)) enclose the TRAM domain.

This sequence belongs to the methylthiotransferase family. MiaB subfamily. As to quaternary structure, monomer. [4Fe-4S] cluster is required as a cofactor.

The protein localises to the cytoplasm. It carries out the reaction N(6)-dimethylallyladenosine(37) in tRNA + (sulfur carrier)-SH + AH2 + 2 S-adenosyl-L-methionine = 2-methylsulfanyl-N(6)-dimethylallyladenosine(37) in tRNA + (sulfur carrier)-H + 5'-deoxyadenosine + L-methionine + A + S-adenosyl-L-homocysteine + 2 H(+). Catalyzes the methylthiolation of N6-(dimethylallyl)adenosine (i(6)A), leading to the formation of 2-methylthio-N6-(dimethylallyl)adenosine (ms(2)i(6)A) at position 37 in tRNAs that read codons beginning with uridine. The polypeptide is tRNA-2-methylthio-N(6)-dimethylallyladenosine synthase (Chromohalobacter salexigens (strain ATCC BAA-138 / DSM 3043 / CIP 106854 / NCIMB 13768 / 1H11)).